The sequence spans 114 residues: Fluoride-specific ion channel FluC 1 (114 aa).

Transmembrane regions (helical) follow at residues 28–48 (VFPWATFIINITGALLLGFLH), 56–76 (ILLLLGTGFLGGYTTFSTFQV), and 91–111 (IIYLLLTVICGILAAYCGSWL). Residues glycine 66 and threonine 69 each coordinate Na(+).

This sequence belongs to the fluoride channel Fluc/FEX (TC 1.A.43) family.

It localises to the cell membrane. It catalyses the reaction fluoride(in) = fluoride(out). Na(+) is not transported, but it plays an essential structural role and its presence is essential for fluoride channel function. In terms of biological role, fluoride-specific ion channel. Important for reducing fluoride concentration in the cell, thus reducing its toxicity. This is Fluoride-specific ion channel FluC 1 from Ligilactobacillus salivarius (strain UCC118) (Lactobacillus salivarius).